A 308-amino-acid chain; its full sequence is Glutaminase (308 aa).

Serine 66, asparagine 117, glutamate 161, asparagine 168, tyrosine 192, tyrosine 244, and valine 262 together coordinate substrate.

It belongs to the glutaminase family. Homotetramer.

The catalysed reaction is L-glutamine + H2O = L-glutamate + NH4(+). This is Glutaminase from Salmonella agona (strain SL483).